A 213-amino-acid chain; its full sequence is N-(5'-phosphoribosyl)anthranilate isomerase (213 aa).

The protein belongs to the TrpF family.

It catalyses the reaction N-(5-phospho-beta-D-ribosyl)anthranilate = 1-(2-carboxyphenylamino)-1-deoxy-D-ribulose 5-phosphate. It functions in the pathway amino-acid biosynthesis; L-tryptophan biosynthesis; L-tryptophan from chorismate: step 3/5. The protein is N-(5'-phosphoribosyl)anthranilate isomerase of Caulobacter sp. (strain K31).